Here is a 225-residue protein sequence, read N- to C-terminus: 3-dehydroquinate dehydratase (225 aa).

3-dehydroquinate is bound by residues 30 to 32 (EWR) and R62. Catalysis depends on H118, which acts as the Proton donor/acceptor. K143 functions as the Schiff-base intermediate with substrate in the catalytic mechanism. 3-dehydroquinate contacts are provided by R186 and Q209.

The protein belongs to the type-I 3-dehydroquinase family. Homodimer.

The catalysed reaction is 3-dehydroquinate = 3-dehydroshikimate + H2O. It participates in metabolic intermediate biosynthesis; chorismate biosynthesis; chorismate from D-erythrose 4-phosphate and phosphoenolpyruvate: step 3/7. Involved in the third step of the chorismate pathway, which leads to the biosynthesis of aromatic amino acids. Catalyzes the cis-dehydration of 3-dehydroquinate (DHQ) and introduces the first double bond of the aromatic ring to yield 3-dehydroshikimate. This is 3-dehydroquinate dehydratase from Streptococcus agalactiae serotype Ia (strain ATCC 27591 / A909 / CDC SS700).